The sequence spans 617 residues: Leucine aminopeptidase 2 (617 aa).

A peptide-binding positions include 139-141 (QCQ) and 271-276 (PYGGME). Histidine 300 is a binding site for Zn(2+). Glutamate 301 serves as the catalytic Proton acceptor. Zn(2+) contacts are provided by histidine 304 and glutamate 323. Tyrosine 388 functions as the Proton donor in the catalytic mechanism.

The protein belongs to the peptidase M1 family. Zn(2+) is required as a cofactor.

It is found in the cytoplasm. The protein localises to the nucleus. The enzyme catalyses an epoxide + H2O = an ethanediol. Its function is as follows. Aminopeptidase that preferentially cleaves di- and tripeptides. Also has low epoxide hydrolase activity (in vitro). Can hydrolyze the epoxide leukotriene LTA(4) but it forms preferentially 5,6-dihydroxy-7,9,11,14-eicosatetraenoic acid rather than the cytokine leukotriene B(4) as the product compared to the homologous mammalian enzyme (in vitro). The chain is Leucine aminopeptidase 2 from Neosartorya fischeri (strain ATCC 1020 / DSM 3700 / CBS 544.65 / FGSC A1164 / JCM 1740 / NRRL 181 / WB 181) (Aspergillus fischerianus).